A 364-amino-acid chain; its full sequence is Aminomethyltransferase (364 aa).

Belongs to the GcvT family. In terms of assembly, the glycine cleavage system is composed of four proteins: P, T, L and H.

It catalyses the reaction N(6)-[(R)-S(8)-aminomethyldihydrolipoyl]-L-lysyl-[protein] + (6S)-5,6,7,8-tetrahydrofolate = N(6)-[(R)-dihydrolipoyl]-L-lysyl-[protein] + (6R)-5,10-methylene-5,6,7,8-tetrahydrofolate + NH4(+). The glycine cleavage system catalyzes the degradation of glycine. The sequence is that of Aminomethyltransferase from Shewanella sp. (strain ANA-3).